The sequence spans 446 residues: Phosphoglucosamine mutase (446 aa).

Ser104 serves as the catalytic Phosphoserine intermediate. Mg(2+) contacts are provided by Ser104, Asp241, Asp243, and Asp245. Ser104 is subject to Phosphoserine.

Belongs to the phosphohexose mutase family. Mg(2+) serves as cofactor. Activated by phosphorylation.

It carries out the reaction alpha-D-glucosamine 1-phosphate = D-glucosamine 6-phosphate. Its function is as follows. Catalyzes the conversion of glucosamine-6-phosphate to glucosamine-1-phosphate. The polypeptide is Phosphoglucosamine mutase (Teredinibacter turnerae (strain ATCC 39867 / T7901)).